The primary structure comprises 270 residues: Putative F-box protein At3g24700 (270 aa).

The F-box domain occupies 1 to 45 (MLTDLPLDLESEILSRVPATSLQRLKTTCKRWYALFRDPRFVKKN).

This Arabidopsis thaliana (Mouse-ear cress) protein is Putative F-box protein At3g24700.